We begin with the raw amino-acid sequence, 234 residues long: 2-C-methyl-D-erythritol 4-phosphate cytidylyltransferase (234 aa).

The protein belongs to the IspD/TarI cytidylyltransferase family. IspD subfamily.

The enzyme catalyses 2-C-methyl-D-erythritol 4-phosphate + CTP + H(+) = 4-CDP-2-C-methyl-D-erythritol + diphosphate. Its pathway is isoprenoid biosynthesis; isopentenyl diphosphate biosynthesis via DXP pathway; isopentenyl diphosphate from 1-deoxy-D-xylulose 5-phosphate: step 2/6. Functionally, catalyzes the formation of 4-diphosphocytidyl-2-C-methyl-D-erythritol from CTP and 2-C-methyl-D-erythritol 4-phosphate (MEP). The chain is 2-C-methyl-D-erythritol 4-phosphate cytidylyltransferase from Thermosynechococcus vestitus (strain NIES-2133 / IAM M-273 / BP-1).